A 39-amino-acid polypeptide reads, in one-letter code: Photosystem II reaction center protein L (39 aa).

Residues 18–38 traverse the membrane as a helical segment; the sequence is SLYLGLLLIAVLGILFSSYFF.

This sequence belongs to the PsbL family. As to quaternary structure, PSII is composed of 1 copy each of membrane proteins PsbA, PsbB, PsbC, PsbD, PsbE, PsbF, PsbH, PsbI, PsbJ, PsbK, PsbL, PsbM, PsbT, PsbX, PsbY, PsbZ, Psb30/Ycf12, peripheral proteins PsbO, CyanoQ (PsbQ), PsbU, PsbV and a large number of cofactors. It forms dimeric complexes.

It localises to the cellular thylakoid membrane. One of the components of the core complex of photosystem II (PSII). PSII is a light-driven water:plastoquinone oxidoreductase that uses light energy to abstract electrons from H(2)O, generating O(2) and a proton gradient subsequently used for ATP formation. It consists of a core antenna complex that captures photons, and an electron transfer chain that converts photonic excitation into a charge separation. This subunit is found at the monomer-monomer interface and is required for correct PSII assembly and/or dimerization. This chain is Photosystem II reaction center protein L, found in Picosynechococcus sp. (strain ATCC 27264 / PCC 7002 / PR-6) (Agmenellum quadruplicatum).